The sequence spans 31 residues: Cytochrome b6-f complex subunit 6 (31 aa).

A helical membrane pass occupies residues 3–23 (TIISYFGFLLASIIFTLILFI).

Belongs to the PetL family. As to quaternary structure, the 4 large subunits of the cytochrome b6-f complex are cytochrome b6, subunit IV (17 kDa polypeptide, PetD), cytochrome f and the Rieske protein, while the 4 small subunits are PetG, PetL, PetM and PetN. The complex functions as a dimer.

It is found in the plastid. The protein resides in the chloroplast thylakoid membrane. Its function is as follows. Component of the cytochrome b6-f complex, which mediates electron transfer between photosystem II (PSII) and photosystem I (PSI), cyclic electron flow around PSI, and state transitions. PetL is important for photoautotrophic growth as well as for electron transfer efficiency and stability of the cytochrome b6-f complex. In Abies homolepis (Nikko fir), this protein is Cytochrome b6-f complex subunit 6.